The sequence spans 215 residues: Adenylate kinase (215 aa).

10–15 (GAGKGT) is an ATP binding site. The segment at 30–59 (STGDILRANVREGTELGLAAKAYMDKGELV) is NMP. AMP-binding positions include Thr31, Arg36, 57–59 (ELV), 85–88 (GYPR), and Gln92. Positions 126 to 162 (GRLMCKCGASYHTIANPPKKDNICDICGGEVYQRDDD) are LID. ATP is bound at residue Arg127. Residues Cys130 and Cys132 each contribute to the Zn(2+) site. Residue 135–136 (SY) coordinates ATP. Residues Cys149 and Cys152 each coordinate Zn(2+). Positions 159 and 170 each coordinate AMP. Lys198 is an ATP binding site.

It belongs to the adenylate kinase family. Monomer.

It is found in the cytoplasm. It catalyses the reaction AMP + ATP = 2 ADP. The protein operates within purine metabolism; AMP biosynthesis via salvage pathway; AMP from ADP: step 1/1. Its function is as follows. Catalyzes the reversible transfer of the terminal phosphate group between ATP and AMP. Plays an important role in cellular energy homeostasis and in adenine nucleotide metabolism. The protein is Adenylate kinase of Methanosarcina mazei (strain ATCC BAA-159 / DSM 3647 / Goe1 / Go1 / JCM 11833 / OCM 88) (Methanosarcina frisia).